The sequence spans 244 residues: tRNA pseudouridine synthase A (244 aa).

D53 functions as the Nucleophile in the catalytic mechanism. Y111 is a substrate binding site.

The protein belongs to the tRNA pseudouridine synthase TruA family. As to quaternary structure, homodimer.

It carries out the reaction uridine(38/39/40) in tRNA = pseudouridine(38/39/40) in tRNA. In terms of biological role, formation of pseudouridine at positions 38, 39 and 40 in the anticodon stem and loop of transfer RNAs. This Bacillus sp. (strain KSM-64) protein is tRNA pseudouridine synthase A.